A 377-amino-acid polypeptide reads, in one-letter code: Homoserine O-acetyltransferase (377 aa).

The region spanning 47–355 (NAILICHALT…DYGHDAFLLE (309 aa)) is the AB hydrolase-1 domain. Residue Ser153 is the Nucleophile of the active site. Arg222 serves as a coordination point for substrate. Residues Asp316 and His349 contribute to the active site. Asp350 is a binding site for substrate.

This sequence belongs to the AB hydrolase superfamily. MetX family. In terms of assembly, homodimer.

It is found in the cytoplasm. The catalysed reaction is L-homoserine + acetyl-CoA = O-acetyl-L-homoserine + CoA. It participates in amino-acid biosynthesis; L-methionine biosynthesis via de novo pathway; O-acetyl-L-homoserine from L-homoserine: step 1/1. In terms of biological role, transfers an acetyl group from acetyl-CoA to L-homoserine, forming acetyl-L-homoserine. This Deferribacter desulfuricans (strain DSM 14783 / JCM 11476 / NBRC 101012 / SSM1) protein is Homoserine O-acetyltransferase.